A 259-amino-acid polypeptide reads, in one-letter code: Phosphate import ATP-binding protein PstB (259 aa).

In terms of domain architecture, ABC transporter spans 11 to 254 (AEARNLNFYY…PQDKRTEDYI (244 aa)). ATP is bound at residue 43 to 50 (GPSGCGKS).

It belongs to the ABC transporter superfamily. Phosphate importer (TC 3.A.1.7) family. In terms of assembly, the complex is composed of two ATP-binding proteins (PstB), two transmembrane proteins (PstC and PstA) and a solute-binding protein (PstS).

The protein localises to the cell inner membrane. It carries out the reaction phosphate(out) + ATP + H2O = ADP + 2 phosphate(in) + H(+). Part of the ABC transporter complex PstSACB involved in phosphate import. Responsible for energy coupling to the transport system. This Dechloromonas aromatica (strain RCB) protein is Phosphate import ATP-binding protein PstB.